Here is a 290-residue protein sequence, read N- to C-terminus: Acetyl-coenzyme A carboxylase carboxyl transferase subunit beta (290 aa).

The CoA carboxyltransferase N-terminal domain maps to 27-290 (LWHKCPSCEA…FTHSPSPVSA (264 aa)). Positions 31, 34, 50, and 53 each coordinate Zn(2+). The segment at 31–53 (CPSCEAVLYRPELEKTLDVCPKC) adopts a C4-type zinc-finger fold.

The protein belongs to the AccD/PCCB family. Acetyl-CoA carboxylase is a heterohexamer composed of biotin carboxyl carrier protein (AccB), biotin carboxylase (AccC) and two subunits each of ACCase subunit alpha (AccA) and ACCase subunit beta (AccD). Zn(2+) is required as a cofactor.

Its subcellular location is the cytoplasm. The enzyme catalyses N(6)-carboxybiotinyl-L-lysyl-[protein] + acetyl-CoA = N(6)-biotinyl-L-lysyl-[protein] + malonyl-CoA. Its pathway is lipid metabolism; malonyl-CoA biosynthesis; malonyl-CoA from acetyl-CoA: step 1/1. Functionally, component of the acetyl coenzyme A carboxylase (ACC) complex. Biotin carboxylase (BC) catalyzes the carboxylation of biotin on its carrier protein (BCCP) and then the CO(2) group is transferred by the transcarboxylase to acetyl-CoA to form malonyl-CoA. The chain is Acetyl-coenzyme A carboxylase carboxyl transferase subunit beta from Pseudomonas paraeruginosa (strain DSM 24068 / PA7) (Pseudomonas aeruginosa (strain PA7)).